The following is a 278-amino-acid chain: Deoxyribonuclease-1-like 2 (278 aa).

The first 21 residues, 1 to 21, serve as a signal peptide directing secretion; it reads MGWPWAPLTAVWALGVMGATA. Catalysis depends on residues glutamate 99 and histidine 150. Cysteines 189 and 225 form a disulfide.

The protein belongs to the DNase I family. Requires Mg(2+) as cofactor. It depends on Ca(2+) as a cofactor.

It localises to the cytoplasm. The protein localises to the secreted. Functionally, divalent cation-dependent acid DNA endonuclease involved in the breakdown of the nucleus during corneocyte formation of epidermal keratinocytes. May play an immune role by eliminating harmful DNA released into the extracellular environment by damaged epidermal cells. The sequence is that of Deoxyribonuclease-1-like 2 (Dnase1l2) from Mus musculus (Mouse).